Reading from the N-terminus, the 570-residue chain is Transmembrane 7 superfamily member 3 (570 aa).

A signal peptide spans 1–21 (MGFLQLLVVAVLASEHRVAGA). N-linked (GlcNAc...) asparagine glycosylation is found at N27, N61, N75, N87, and N264. The next 7 membrane-spanning stretches (helical) occupy residues 296–313 (VFFT…FFGH), 320–342 (LFFI…LTPI), 347–369 (NLIL…WWRF), 371–393 (ILSI…VTFF), 408–430 (FWVT…LRIL), 437–459 (VIGS…SYIT), and 479–501 (PFQT…GITL).

As to expression, widely expressed. Highly expressed in kidney and pancreas.

It localises to the cell membrane. Its function is as follows. Involved in the inhibition of cytokine-induced death of pancreatic beta cells. Involved in the promotion of insulin secretion from pancreatic beta cells. Is a downstream transcriptional target of p53/TP53, and acts as a pro-survival homeostatic factor that attenuates the development of cellular stress. Maintains protein homeostasis and promotes cell survival through attenuation of endoplasmic reticulum (ER) stress and the subsequent induction of unfolded protein response (UPR). The protein is Transmembrane 7 superfamily member 3 (TM7SF3) of Homo sapiens (Human).